Reading from the N-terminus, the 84-residue chain is Small ribosomal subunit protein bS20 (84 aa).

This sequence belongs to the bacterial ribosomal protein bS20 family.

In terms of biological role, binds directly to 16S ribosomal RNA. The sequence is that of Small ribosomal subunit protein bS20 from Bacteroides fragilis (strain ATCC 25285 / DSM 2151 / CCUG 4856 / JCM 11019 / LMG 10263 / NCTC 9343 / Onslow / VPI 2553 / EN-2).